A 364-amino-acid chain; its full sequence is Caffeic acid 3-O-methyltransferase 2 (364 aa).

Position 129–135 (129–135 (MNQDKVL)) interacts with substrate. Positions 161 to 179 (AFEYHGTDPRFNKVFNKGM) are substrate binding. 5 residues coordinate S-adenosyl-L-methionine: Gly207, Asp230, Asp250, Met251, and Lys264. His268 acts as the Proton acceptor in catalysis.

This sequence belongs to the class I-like SAM-binding methyltransferase superfamily. Cation-independent O-methyltransferase family. COMT subfamily. As to quaternary structure, homodimer.

It carries out the reaction (E)-caffeate + S-adenosyl-L-methionine = (E)-ferulate + S-adenosyl-L-homocysteine + H(+). It participates in aromatic compound metabolism; phenylpropanoid biosynthesis. Catalyzes the conversion of caffeic acid to ferulic acid and of 5-hydroxyferulic acid to sinapic acid. The resulting products may subsequently be converted to the corresponding alcohols that are incorporated into lignins. In Populus tremuloides (Quaking aspen), this protein is Caffeic acid 3-O-methyltransferase 2 (OMT2).